The chain runs to 79 residues: UPF0154 protein SSP1415 (79 aa).

A helical transmembrane segment spans residues 4-24 (WLAIVLIVLALILGLVGGFFL).

This sequence belongs to the UPF0154 family.

Its subcellular location is the membrane. The polypeptide is UPF0154 protein SSP1415 (Staphylococcus saprophyticus subsp. saprophyticus (strain ATCC 15305 / DSM 20229 / NCIMB 8711 / NCTC 7292 / S-41)).